A 204-amino-acid polypeptide reads, in one-letter code: MVTIIAGIILSGGKGERIGGKKPFRVFNGKYLINYPSDILKSLNIPFVTVFAKNSIDLEMEKEYLTKYKCLISFDLIEGKGPLMGILCGMRVLNAKWFVVLPCDCPYINKEALKKLISNISIAEKNNNLCIIPKHENGYIEPLFALYKRDALSILNKIIMEDKNLSIRYFISYLNPLYIKAEELDESKRIFKNINTIEELMDNE.

Residues 10 to 12, Lys-22, Asp-75, and Asp-104 each bind GTP; that span reads LSG. Residue Asp-104 participates in Mg(2+) binding.

Belongs to the MobA family. Requires Mg(2+) as cofactor.

It localises to the cytoplasm. The catalysed reaction is Mo-molybdopterin + GTP + H(+) = Mo-molybdopterin guanine dinucleotide + diphosphate. Transfers a GMP moiety from GTP to Mo-molybdopterin (Mo-MPT) cofactor (Moco or molybdenum cofactor) to form Mo-molybdopterin guanine dinucleotide (Mo-MGD) cofactor. The polypeptide is Probable molybdenum cofactor guanylyltransferase (Methanocaldococcus jannaschii (strain ATCC 43067 / DSM 2661 / JAL-1 / JCM 10045 / NBRC 100440) (Methanococcus jannaschii)).